Reading from the N-terminus, the 171-residue chain is MAMKTQRKENVLFQNVKPREIPLVDNPFSTYPYKHVITETQPTQAKNQAIWGLVQMGLSGEAAAMYGDVVVQKTTRACRKSEGGFKDVNTELWGTSPYLGRGDGEVYNMPASNQLLRGFESSLRGSRVRTQIDDKSFIPYTWQMIDVPLAAAKTSFIAGLDTRQQLAYGNP.

In terms of assembly, interacts with the major capsid protein.

It is found in the virion. In terms of biological role, one of the minor capsid proteins that constitute a network internal to the major capsid proteins and outside the lipid membrane. The minor capsid proteins glue and stabilize the capsomers. The polypeptide is Minor capsid protein 3 (Chlorella (PBCV-1)).